The following is a 100-amino-acid chain: UPF0248 protein APE_0939 (100 aa).

This sequence belongs to the UPF0248 family.

The protein is UPF0248 protein APE_0939 of Aeropyrum pernix (strain ATCC 700893 / DSM 11879 / JCM 9820 / NBRC 100138 / K1).